A 164-amino-acid chain; its full sequence is MTQIDYTRAAKYFLLQDVWQGFKLGLKYFFAPKATINYPHEKGPLSPRFRGEHALRRYPNGEERCIACKLCEAVCPAQAITIDAEPREDGSRRTTRYDIDMTKCIYCGFCQEACPVDAIVEGPNFEFATETREELFYDKDKLLANGERWEAEIARNLELDAPYR.

4Fe-4S ferredoxin-type domains are found at residues 55–85 (LRRY…IDAE) and 95–124 (TRYD…EGPN). [4Fe-4S] cluster contacts are provided by C65, C68, C71, C75, C104, C107, C110, and C114.

The protein belongs to the complex I 23 kDa subunit family. NDH-1 is composed of 14 different subunits. Subunits NuoA, H, J, K, L, M, N constitute the membrane sector of the complex. [4Fe-4S] cluster is required as a cofactor.

Its subcellular location is the cell inner membrane. It carries out the reaction a quinone + NADH + 5 H(+)(in) = a quinol + NAD(+) + 4 H(+)(out). NDH-1 shuttles electrons from NADH, via FMN and iron-sulfur (Fe-S) centers, to quinones in the respiratory chain. The immediate electron acceptor for the enzyme in this species is believed to be ubiquinone. Couples the redox reaction to proton translocation (for every two electrons transferred, four hydrogen ions are translocated across the cytoplasmic membrane), and thus conserves the redox energy in a proton gradient. The protein is NADH-quinone oxidoreductase subunit I of Ruegeria sp. (strain TM1040) (Silicibacter sp.).